Reading from the N-terminus, the 1336-residue chain is Vascular endothelial growth factor receptor 1 (1336 aa).

Positions 1 to 22 are cleaved as a signal peptide; that stretch reads MVSCWDTAVLPCALLGCLLLTG. Topologically, residues 23-758 are extracellular; sequence YCSGSKLKGP…QGTSDKSNLE (736 aa). Ig-like C2-type domains are found at residues 32–121, 151–214, 230–327, 335–421, 429–549, 556–655, and 661–747; these read PELS…KKME, GREL…VNGH, LDVQ…TSVH, SVKH…LTAT, QIYE…RDIR, PNGF…EVLV, and PLLL…AYLT. Disulfide bonds link C53–C107 and C158–C207. N-linked (GlcNAc...) asparagine glycosylation is found at N100, N164, N196, and N251. A disulfide bridge connects residues C252 and C311. Residues N323, N417, N474, N516, N597, N625, N666, and N713 are each glycosylated (N-linked (GlcNAc...) asparagine). 2 cysteine pairs are disulfide-bonded: C454–C535 and C577–C636. C682 and C731 are disulfide-bonded. Residues 759–780 traverse the membrane as a helical segment; sequence LITLTCTCVAATLFWLLLTLFI. Residues 781–1336 are Cytoplasmic-facing; it reads RKLKRSSSEV…SVVLYSSPPA (556 aa). Residues 827–1158 form the Protein kinase domain; sequence LKLGKSLGRG…ELVEKLGDLL (332 aa). Residues 833-841 and K861 each bind ATP; that span reads LGRGAFGKV. Y914 is subject to Phosphotyrosine; by autocatalysis. The segment covering 941–957 has biased composition (basic and acidic residues); it reads KKEKLEPDLEQDQKPRL. The tract at residues 941 to 982 is disordered; the sequence is KKEKLEPDLEQDQKPRLDSVSSSESFTSSGFQEDKSVSDVEG. The span at 959 to 969 shows a compositional bias: low complexity; that stretch reads SVSSSESFTSS. Residue D1022 is the Proton acceptor of the active site. 6 positions are modified to phosphotyrosine; by autocatalysis: Y1053, Y1169, Y1213, Y1242, Y1325, and Y1331. The disordered stretch occupies residues 1304–1326; it reads RQEDEDDPELGKESCCSPPPDYN.

It belongs to the protein kinase superfamily. Tyr protein kinase family. CSF-1/PDGF receptor subfamily. As to quaternary structure, interacts with VEGFA, VEGFB and PGF. Monomer in the absence of bound VEGFA, VEGFB or PGF. Homodimer in the presence of bound VEGFA, VEGFB and PGF. Can also form a heterodimer with KDR. Interacts (tyrosine phosphorylated) with CBL, CRK, GRB2, NCK1, PIK3R1, PLCG, PSEN1 and PTPN11. Probably interacts with PTPRB. Interacts with RACK1. Identified in a complex with CBL and CD2AP. Post-translationally, N-glycosylated. Ubiquitinated after VEGFA-mediated autophosphorylation, leading to proteolytic degradation. In terms of processing, autophosphorylated on tyrosine residues upon ligand binding. Autophosphorylation occurs in trans, i.e. one subunit of the dimeric receptor phosphorylates tyrosine residues on the other subunit. Phosphorylation at Tyr-1169 is important for interaction with PLCG. Phosphorylation at Tyr-1213 is important for interaction with PIK3R1, PTPN11, GRB2, and PLCG. Phosphorylation at Tyr-1331 is important for endocytosis and for interaction with CBL, NCK1 and CRK. Is probably dephosphorylated by PTPRB.

The protein localises to the cell membrane. It localises to the endosome. The enzyme catalyses L-tyrosyl-[protein] + ATP = O-phospho-L-tyrosyl-[protein] + ADP + H(+). With respect to regulation, present in an inactive conformation in the absence of bound ligand. Binding of VEGFA, VEGFB or PGF leads to dimerization and activation by autophosphorylation on tyrosine residues. Functionally, tyrosine-protein kinase that acts as a cell-surface receptor for VEGFA, VEGFB and PGF, and plays an essential role in the development of embryonic vasculature, the regulation of angiogenesis, cell survival, cell migration, macrophage function, chemotaxis, and cancer cell invasion. Acts as a positive regulator of postnatal retinal hyaloid vessel regression. May play an essential role as a negative regulator of embryonic angiogenesis by inhibiting excessive proliferation of endothelial cells. Can promote endothelial cell proliferation, survival and angiogenesis in adulthood. Its function in promoting cell proliferation seems to be cell-type specific. Promotes PGF-mediated proliferation of endothelial cells, and proliferation of some types of cancer cells, but does not promote proliferation of normal fibroblasts. Has very high affinity for VEGFA and relatively low protein kinase activity; may function as a negative regulator of VEGFA signaling by limiting the amount of free VEGFA and preventing its binding to KDR. Modulates KDR signaling by forming heterodimers with KDR. Ligand binding leads to the activation of several signaling cascades. Activation of PLCG leads to the production of the cellular signaling molecules diacylglycerol and inositol 1,4,5-trisphosphate and the activation of protein kinase C. Mediates phosphorylation of PIK3R1, the regulatory subunit of phosphatidylinositol 3-kinase, leading to the activation of phosphatidylinositol kinase and the downstream signaling pathway. Mediates activation of MAPK1/ERK2, MAPK3/ERK1 and the MAP kinase signaling pathway, as well as of the AKT1 signaling pathway. Phosphorylates SRC, YES1 and PLCG, and may also phosphorylate CBL. Promotes phosphorylation of AKT1 and PTK2/FAK1. In Rattus norvegicus (Rat), this protein is Vascular endothelial growth factor receptor 1 (Flt1).